Consider the following 106-residue polypeptide: UPF0145 protein MA_3383 (106 aa).

This sequence belongs to the UPF0145 family.

The polypeptide is UPF0145 protein MA_3383 (Methanosarcina acetivorans (strain ATCC 35395 / DSM 2834 / JCM 12185 / C2A)).